The sequence spans 192 residues: UPF0301 protein Rru_A3059 (192 aa).

It belongs to the UPF0301 (AlgH) family.

In Rhodospirillum rubrum (strain ATCC 11170 / ATH 1.1.1 / DSM 467 / LMG 4362 / NCIMB 8255 / S1), this protein is UPF0301 protein Rru_A3059.